The primary structure comprises 125 residues: Secreted RxLR effector protein 55 (125 aa).

A signal peptide spans 1-21 (MAASRSSITTLLLLIVAVALG). The short motif at 35 to 38 (RQLR) is the RxLR element. The segment covering 51-87 (ESATSSSSSSALDHKSSAPGEATNASETEHSAASTAS) has biased composition (low complexity). The disordered stretch occupies residues 51–96 (ESATSSSSSSALDHKSSAPGEATNASETEHSAASTASEPKHEGPTM). Asn74 is a glycosylation site (N-linked (GlcNAc...) asparagine). A helical transmembrane segment spans residues 99 to 119 (FVGPAAAGVLAILLIGAVIAF).

It belongs to the RxLR effector family.

It is found in the secreted. The protein localises to the host cell membrane. Functionally, effector that acts as a broad suppressor of cell death to interrupt plant immunity. Inhibits cell death induced by cell death-inducing proteins, including the PAMP elicitor INF1 from P.infestans. The protein is Secreted RxLR effector protein 55 of Plasmopara viticola (Downy mildew of grapevine).